Reading from the N-terminus, the 165-residue chain is Cytochrome c-type biogenesis protein CcmE (165 aa).

Over 1-7 the chain is Cytoplasmic; that stretch reads MTRKQKR. A helical; Signal-anchor for type II membrane protein membrane pass occupies residues 8 to 28; sequence LAVIAGGMGFIIAAVLLVMFA. Topologically, residues 29–165 are periplasmic; it reads FSQSVAYFYM…GQGQEAKATR (137 aa). His-124 and Tyr-128 together coordinate heme. Over residues 144–154 the composition is skewed to low complexity; that stretch reads QDGQGAQSQAG. Residues 144–165 are disordered; the sequence is QDGQGAQSQAGQGQGQEAKATR.

This sequence belongs to the CcmE/CycJ family.

Its subcellular location is the cell inner membrane. Its function is as follows. Heme chaperone required for the biogenesis of c-type cytochromes. Transiently binds heme delivered by CcmC and transfers the heme to apo-cytochromes in a process facilitated by CcmF and CcmH. The polypeptide is Cytochrome c-type biogenesis protein CcmE (Rhizobium etli (strain CIAT 652)).